We begin with the raw amino-acid sequence, 297 residues long: uncharacterized protein (297 aa).

A disordered region spans residues V175 to K199. Residues L176–R185 show a composition bias toward polar residues. N-linked (GlcNAc...) asparagine; by host glycosylation is present at N269. A helical membrane pass occupies residues L277–L297.

It belongs to the ascovirus HvAV ORF18 family.

It is found in the membrane. This is an uncharacterized protein from Noctuidae (owlet moths).